We begin with the raw amino-acid sequence, 102 residues long: NADH-quinone oxidoreductase subunit K 2 (102 aa).

3 helical membrane-spanning segments follow: residues 4–24 (ITPV…TVGV), 30–50 (IVII…NLIA), and 62–82 (IFAI…LGIL).

Belongs to the complex I subunit 4L family. NDH-1 is composed of 14 different subunits. Subunits NuoA, H, J, K, L, M, N constitute the membrane sector of the complex.

It is found in the cell inner membrane. It catalyses the reaction a quinone + NADH + 5 H(+)(in) = a quinol + NAD(+) + 4 H(+)(out). Functionally, NDH-1 shuttles electrons from NADH, via FMN and iron-sulfur (Fe-S) centers, to quinones in the respiratory chain. The immediate electron acceptor for the enzyme in this species is believed to be ubiquinone. Couples the redox reaction to proton translocation (for every two electrons transferred, four hydrogen ions are translocated across the cytoplasmic membrane), and thus conserves the redox energy in a proton gradient. This is NADH-quinone oxidoreductase subunit K 2 from Solibacter usitatus (strain Ellin6076).